The primary structure comprises 597 residues: Aspartate--tRNA(Asp/Asn) ligase (597 aa).

Glu178 provides a ligand contact to L-aspartate. The interval 202 to 205 (QLFK) is aspartate. Arg224 is a binding site for L-aspartate. Residues 224–226 (RDE) and Gln233 contribute to the ATP site. His458 lines the L-aspartate pocket. Glu488 is a binding site for ATP. Residue Arg495 coordinates L-aspartate. Residue 540–543 (GLDR) coordinates ATP.

The protein belongs to the class-II aminoacyl-tRNA synthetase family. Type 1 subfamily. Homodimer.

Its subcellular location is the cytoplasm. It carries out the reaction tRNA(Asx) + L-aspartate + ATP = L-aspartyl-tRNA(Asx) + AMP + diphosphate. In terms of biological role, aspartyl-tRNA synthetase with relaxed tRNA specificity since it is able to aspartylate not only its cognate tRNA(Asp) but also tRNA(Asn). Reaction proceeds in two steps: L-aspartate is first activated by ATP to form Asp-AMP and then transferred to the acceptor end of tRNA(Asp/Asn). This is Aspartate--tRNA(Asp/Asn) ligase from Cyanothece sp. (strain PCC 7425 / ATCC 29141).